The chain runs to 140 residues: ATP synthase epsilon chain (140 aa).

The protein belongs to the ATPase epsilon chain family. In terms of assembly, F-type ATPases have 2 components, CF(1) - the catalytic core - and CF(0) - the membrane proton channel. CF(1) has five subunits: alpha(3), beta(3), gamma(1), delta(1), epsilon(1). CF(0) has three main subunits: a, b and c.

The protein resides in the cell inner membrane. Its function is as follows. Produces ATP from ADP in the presence of a proton gradient across the membrane. The chain is ATP synthase epsilon chain from Bdellovibrio bacteriovorus (strain ATCC 15356 / DSM 50701 / NCIMB 9529 / HD100).